The chain runs to 210 residues: Outer-membrane lipoprotein LolB (210 aa).

Residues 1–19 form the signal peptide; it reads MNHLKSFFTALVAGFILTA. C20 carries the N-palmitoyl cysteine lipid modification. Residue C20 is the site of S-diacylglycerol cysteine attachment.

The protein belongs to the LolB family. As to quaternary structure, monomer.

Its subcellular location is the cell outer membrane. In terms of biological role, plays a critical role in the incorporation of lipoproteins in the outer membrane after they are released by the LolA protein. This Mannheimia succiniciproducens (strain KCTC 0769BP / MBEL55E) protein is Outer-membrane lipoprotein LolB.